Reading from the N-terminus, the 743-residue chain is MTIPNTIPITPELIAGHGLKPDEYQRILDLIGREPTFTELGIFSAMWNEHCSYKSSKKWLRTLPTKGPRVIQGPGENAGVVDIDDGDCVVFKMESHNHPSYIEPYQGAATGVGGILRDVFTMGARPIAAMNALRFGEPDHPKTRHLVSGVVSGVGGYGNSFGVPTVGGEVEFDARYNGNILVNAFAAGIAKSNAIFLSEAKGVGLPVVYLGAKTGRDGVGGATMASAEFDESIEEKRPTVQVGDPFTEKCLLEACLELMQTGAVIAIQDMGAAGLTCSAVEMGAKGDLGILLELDKVPVREERMTAYEMMLSESQERMLMVLQPEKEEQAKAIFVKWGLDFAIVGKTTDDLRFRVVHQGEEVANLPIKDLGDQAPEYDRPWRESGKPAPLPANLVAAPKNYGQALLQLVGSANQSSRRWVYEQYDTLIQGNSLQLPGGDAGVVRVDGHKSKALAFSSDVTPRYVEADPFEGGKQAVAECWRNITATGAEPLAATDNLNFGNPEKPEIMGQFVQAVKGIGEACRALDFPIVSGNVSLYNETNGVAILPTPTIAGVGLLPDWSKMARIGSANDGDKVIMIGLDGSHLGQSVYLRDVLDSREGPAPEVDLFAERRNGDFVRSVIRNDQATACHDISSGGLAVALAEMAMASGKGLTIDLGECKGAPHALLFGEDQARYVLTVPADVADFVCVNAEGAGVPFRRLGTVGGDALVVDDLITLPIQQLRDTHESWFPDFMEGRGELAAE.

His-50 is a catalytic residue. Tyr-53 and Lys-92 together coordinate ATP. Glu-94 is a Mg(2+) binding site. Substrate-binding positions include 95 to 98 (SHNH) and Arg-117. Catalysis depends on His-96, which acts as the Proton acceptor. Asp-118 provides a ligand contact to Mg(2+). Substrate is bound at residue Gln-241. Asp-269 is a binding site for Mg(2+). Substrate is bound at residue 313–315 (ESQ). Positions 495 and 532 each coordinate ATP. Asn-533 serves as a coordination point for Mg(2+). Residue Ser-535 participates in substrate binding.

It belongs to the FGAMS family. In terms of assembly, monomer. Part of the FGAM synthase complex composed of 1 PurL, 1 PurQ and 2 PurS subunits.

The protein resides in the cytoplasm. The catalysed reaction is N(2)-formyl-N(1)-(5-phospho-beta-D-ribosyl)glycinamide + L-glutamine + ATP + H2O = 2-formamido-N(1)-(5-O-phospho-beta-D-ribosyl)acetamidine + L-glutamate + ADP + phosphate + H(+). Its pathway is purine metabolism; IMP biosynthesis via de novo pathway; 5-amino-1-(5-phospho-D-ribosyl)imidazole from N(2)-formyl-N(1)-(5-phospho-D-ribosyl)glycinamide: step 1/2. Part of the phosphoribosylformylglycinamidine synthase complex involved in the purines biosynthetic pathway. Catalyzes the ATP-dependent conversion of formylglycinamide ribonucleotide (FGAR) and glutamine to yield formylglycinamidine ribonucleotide (FGAM) and glutamate. The FGAM synthase complex is composed of three subunits. PurQ produces an ammonia molecule by converting glutamine to glutamate. PurL transfers the ammonia molecule to FGAR to form FGAM in an ATP-dependent manner. PurS interacts with PurQ and PurL and is thought to assist in the transfer of the ammonia molecule from PurQ to PurL. The protein is Phosphoribosylformylglycinamidine synthase subunit PurL of Rhizobium etli (strain CIAT 652).